Here is a 748-residue protein sequence, read N- to C-terminus: MSSDANSDDPFSKPIVRKRFQATLAQQGIEDDQLPSVRSSDSPDVPDTPDVPVNQLSSPPLSLPETLSEGNAETLQNLSDDSEPEMLSQSSTSSLNRRMEDSAIDPSRGTRKSQSRGFDYDPAGERTTAPVQKKKKDEIDMGGAKFFPKQEKKHVYTHKWTTEEDDEDEKTISSSSNRYSSRPNQPAVSARPRQPVYATTSTYSKPLASGYGSRVRHIKEANELRESGEYDDFKQDLVYILSSLQSSDASMKVKCLSAISLAKKCVSPDFRQFIKSENMTKSIVKALMDSPEDDLFALAASTVLYLLTRDFNSIKIDFPSLRLVSQLLRIEKFEQRPEDKDKVVNMVWEVFNSYIEKQEVGGQKVSFDMRKESLTPSSLIIEALVFICSRSVNDDNLKSELLNLGILQFVVAKIETNVNLIADNADDTYSILILNRCFRILESSSVFHKKNQAFLISHRSNILISSLAKFLQVILDRVHQLAEEEVKKYISCLALMCRLLINISHDNELCCSKLGQIEGFLPNAITTFTYLAPKFGKENSYDINVMMTSLLTNLVERCNANRKVLIAQTVKMVIPGHDVEEVPALEAITRLFVYHESQAQIVDADLDRELAFDEGGCGDEEEEEEGGDESSDEDGVRKDGRLDRNKMDRMDQVDVVHALQQVMNKASAHMEGSVIASYHALLVGFVLQQNEDHLDEVRKHLPGKNFQNMISQLKRLYDFTKATMAKRVESNSGFRAIERVIEYLERLE.

Disordered stretches follow at residues 23 to 199 and 614 to 644; these read TLAQ…VYAT and EGGC…RLDR. Residues 35 to 64 are compositionally biased toward low complexity; the sequence is PSVRSSDSPDVPDTPDVPVNQLSSPPLSLP. Polar residues-rich tracts occupy residues 68 to 79 and 87 to 96; these read SEGNAETLQNLS and LSQSSTSSLN. The span at 172–182 shows a compositional bias: low complexity; that stretch reads ISSSSNRYSSR. The region spanning 205–723 is the WAPL domain; that stretch reads KPLASGYGSR…KRLYDFTKAT (519 aa). The span at 616 to 633 shows a compositional bias: acidic residues; it reads GCGDEEEEEEGGDESSDE. The segment covering 634 to 644 has biased composition (basic and acidic residues); sequence DGVRKDGRLDR.

Belongs to the WAPL family.

Its subcellular location is the nucleus. Functionally, regulator of meiotic chromosome structure and function, playing a role in sister chromatid cohesion, possibly via antagonizing the coh-3/-4 association with axial elements in nuclei during late prophase, cohesin association with chromatin, DNA double strand break repair and polar body positioning following meiotic divisions during oogenesis. Regulates the morphogenesis and temporal assembly of axial elements to control the organization of meiotic chromosomes in pachytene nuclei and is also involved in meiotic chromosomal remodeling in late pachytene nuclei. Required for the removal of the cohesin component scc-1 from mitotic chromosomes. In Caenorhabditis elegans, this protein is Wings apart-like protein homolog 1.